Reading from the N-terminus, the 249-residue chain is 2,3-bisphosphoglycerate-dependent phosphoglycerate mutase (249 aa).

Substrate is bound by residues 11 to 18 (RHGNSEWN), 24 to 25 (TG), arginine 63, 90 to 93 (ERHY), lysine 101, 117 to 118 (RR), and 185 to 186 (GN). Catalysis depends on histidine 12, which acts as the Tele-phosphohistidine intermediate. The Proton donor/acceptor role is filled by glutamate 90.

The protein belongs to the phosphoglycerate mutase family. BPG-dependent PGAM subfamily.

The enzyme catalyses (2R)-2-phosphoglycerate = (2R)-3-phosphoglycerate. It participates in carbohydrate degradation; glycolysis; pyruvate from D-glyceraldehyde 3-phosphate: step 3/5. Functionally, catalyzes the interconversion of 2-phosphoglycerate and 3-phosphoglycerate. This Leifsonia xyli subsp. xyli (strain CTCB07) protein is 2,3-bisphosphoglycerate-dependent phosphoglycerate mutase.